Here is a 308-residue protein sequence, read N- to C-terminus: Aspartate carbamoyltransferase catalytic subunit (308 aa).

The carbamoyl phosphate site is built by Arg59 and Thr60. Lys87 provides a ligand contact to L-aspartate. Carbamoyl phosphate is bound by residues Arg109, His139, and Gln142. Arg172 and Arg224 together coordinate L-aspartate. Residues Ala265 and Pro266 each coordinate carbamoyl phosphate.

The protein belongs to the aspartate/ornithine carbamoyltransferase superfamily. ATCase family. In terms of assembly, heterododecamer (2C3:3R2) of six catalytic PyrB chains organized as two trimers (C3), and six regulatory PyrI chains organized as three dimers (R2).

The catalysed reaction is carbamoyl phosphate + L-aspartate = N-carbamoyl-L-aspartate + phosphate + H(+). The protein operates within pyrimidine metabolism; UMP biosynthesis via de novo pathway; (S)-dihydroorotate from bicarbonate: step 2/3. Catalyzes the condensation of carbamoyl phosphate and aspartate to form carbamoyl aspartate and inorganic phosphate, the committed step in the de novo pyrimidine nucleotide biosynthesis pathway. The protein is Aspartate carbamoyltransferase catalytic subunit of Streptococcus thermophilus (strain ATCC BAA-491 / LMD-9).